A 259-amino-acid polypeptide reads, in one-letter code: Eukaryotic translation initiation factor 3 subunit G-2 (259 aa).

The 79-residue stretch at 179 to 257 (SAVRISNLSE…LILSVEWSKP (79 aa)) folds into the RRM domain.

The protein belongs to the eIF-3 subunit G family. As to quaternary structure, component of the eukaryotic translation initiation factor 3 (eIF-3) complex. The eIF-3 complex interacts with pix.

Its subcellular location is the cytoplasm. Functionally, RNA-binding component of the eukaryotic translation initiation factor 3 (eIF-3) complex, which is involved in protein synthesis of a specialized repertoire of mRNAs and, together with other initiation factors, stimulates binding of mRNA and methionyl-tRNAi to the 40S ribosome. The eIF-3 complex specifically targets and initiates translation of a subset of mRNAs involved in cell proliferation. This subunit can bind 18S rRNA. The protein is Eukaryotic translation initiation factor 3 subunit G-2 of Drosophila virilis (Fruit fly).